We begin with the raw amino-acid sequence, 201 residues long: FMN-dependent NADH:quinone oxidoreductase (201 aa).

FMN-binding positions include Ser-10, 16–18, 96–99, and 140–143; these read SQS, MYNF, and SRGG.

It belongs to the azoreductase type 1 family. In terms of assembly, homodimer. The cofactor is FMN.

The catalysed reaction is 2 a quinone + NADH + H(+) = 2 a 1,4-benzosemiquinone + NAD(+). It catalyses the reaction N,N-dimethyl-1,4-phenylenediamine + anthranilate + 2 NAD(+) = 2-(4-dimethylaminophenyl)diazenylbenzoate + 2 NADH + 2 H(+). Quinone reductase that provides resistance to thiol-specific stress caused by electrophilic quinones. Its function is as follows. Also exhibits azoreductase activity. Catalyzes the reductive cleavage of the azo bond in aromatic azo compounds to the corresponding amines. In Salmonella paratyphi A (strain ATCC 9150 / SARB42), this protein is FMN-dependent NADH:quinone oxidoreductase.